We begin with the raw amino-acid sequence, 231 residues long: 4-hydroxy-tetrahydrodipicolinate reductase (231 aa).

Residues Asp-33, 68 to 70, and 92 to 95 each bind NAD(+); these read CTT and SSNT. The active-site Proton donor/acceptor is the His-124. His-125 provides a ligand contact to (S)-2,3,4,5-tetrahydrodipicolinate. Lys-128 functions as the Proton donor in the catalytic mechanism. Residue 134–135 participates in (S)-2,3,4,5-tetrahydrodipicolinate binding; that stretch reads GT.

It belongs to the DapB family.

The protein resides in the cytoplasm. The catalysed reaction is (S)-2,3,4,5-tetrahydrodipicolinate + NAD(+) + H2O = (2S,4S)-4-hydroxy-2,3,4,5-tetrahydrodipicolinate + NADH + H(+). The enzyme catalyses (S)-2,3,4,5-tetrahydrodipicolinate + NADP(+) + H2O = (2S,4S)-4-hydroxy-2,3,4,5-tetrahydrodipicolinate + NADPH + H(+). The protein operates within amino-acid biosynthesis; L-lysine biosynthesis via DAP pathway; (S)-tetrahydrodipicolinate from L-aspartate: step 4/4. Its function is as follows. Catalyzes the conversion of 4-hydroxy-tetrahydrodipicolinate (HTPA) to tetrahydrodipicolinate. This Brachyspira hyodysenteriae (strain ATCC 49526 / WA1) protein is 4-hydroxy-tetrahydrodipicolinate reductase.